A 353-amino-acid polypeptide reads, in one-letter code: MTIALGRFSKEENDLFDIMDDWLRRDRFVFVGWSGLLLFPCAYFALGGWFTGTTFVTSWYTHGLASSYLEGCNFLTAAVSTPANSLAHSLLLLWGPEAQGDFTRWCQLGGLWTFVALHGAFGLIGFMLRQFELARSVQLRPYNAIAFSAPIAVFVSVFLIYPLGQSGWFFAPSFGVAAIFRFILFFQGFHNWTLNPFHMMGVAGVLGAALLCAIHGATVENTLFEDGDGANTFRAFNPTQAEETYSMVTANRFWSQIFGVAFSNKRWLHFFMLFVPVTGLWMSALGVVGLALNLRAYDFVSQEIRAAEDPEFETFYTKNILLNEGIRAWMAAQDQPHENLIFPEEVLPRGNAL.

The residue at position 2 (T2) is an N-acetylthreonine. T2 is subject to Phosphothreonine. A helical membrane pass occupies residues 41 to 61 (CAYFALGGWFTGTTFVTSWYT). H118 is a binding site for chlorophyll a. Residues 125-141 (GFMLRQFELARSVQLRP) form a helical membrane-spanning segment. The pheophytin a site is built by Q130 and N143. A helical membrane pass occupies residues 153–166 (VFVSVFLIYPLGQS). H198 contributes to the chlorophyll a binding site. Residues 208–228 (AALLCAIHGATVENTLFEDGD) form a helical membrane-spanning segment. Residues H215 and F262 each coordinate a plastoquinone. H215 serves as a coordination point for Fe cation. H269 provides a ligand contact to Fe cation. A helical membrane pass occupies residues 279 to 295 (GLWMSALGVVGLALNLR).

This sequence belongs to the reaction center PufL/M/PsbA/D family. PSII is composed of 1 copy each of membrane proteins PsbA, PsbB, PsbC, PsbD, PsbE, PsbF, PsbH, PsbI, PsbJ, PsbK, PsbL, PsbM, PsbT, PsbX, PsbY, PsbZ, Psb30/Ycf12, at least 3 peripheral proteins of the oxygen-evolving complex and a large number of cofactors. It forms dimeric complexes. The D1/D2 heterodimer binds P680, chlorophylls that are the primary electron donor of PSII, and subsequent electron acceptors. It shares a non-heme iron and each subunit binds pheophytin, quinone, additional chlorophylls, carotenoids and lipids. There is also a Cl(-1) ion associated with D1 and D2, which is required for oxygen evolution. The PSII complex binds additional chlorophylls, carotenoids and specific lipids. serves as cofactor.

It is found in the plastid. It localises to the chloroplast thylakoid membrane. The enzyme catalyses 2 a plastoquinone + 4 hnu + 2 H2O = 2 a plastoquinol + O2. Functionally, photosystem II (PSII) is a light-driven water:plastoquinone oxidoreductase that uses light energy to abstract electrons from H(2)O, generating O(2) and a proton gradient subsequently used for ATP formation. It consists of a core antenna complex that captures photons, and an electron transfer chain that converts photonic excitation into a charge separation. The D1/D2 (PsbA/PsbD) reaction center heterodimer binds P680, the primary electron donor of PSII as well as several subsequent electron acceptors. D2 is needed for assembly of a stable PSII complex. In Amborella trichopoda, this protein is Photosystem II D2 protein.